The following is a 460-amino-acid chain: Endoglucanase 2 (460 aa).

The signal sequence occupies residues 1–32 (MIKGSSLKRIKSLVMMAIFSVSIITTAIVSSA). Glu-99 serves as the catalytic Proton donor. Asp-155 functions as the Nucleophile in the catalytic mechanism. One can recognise a Dockerin domain in the interval 400-460 (QQGLKGDVNN…FAQLKVKLLN (61 aa)).

It belongs to the glycosyl hydrolase 8 (cellulase D) family.

The catalysed reaction is Endohydrolysis of (1-&gt;4)-beta-D-glucosidic linkages in cellulose, lichenin and cereal beta-D-glucans.. The chain is Endoglucanase 2 (celB) from Ruminiclostridium josui (Clostridium josui).